A 724-amino-acid chain; its full sequence is Peroxidase mlt-7 (724 aa).

The first 24 residues, 1-24 (MRRLHRNLSLLFLICILNEYRIES), serve as a signal peptide directing secretion. N-linked (GlcNAc...) asparagine glycosylation occurs at asparagine 7. A propeptide spanning residues 25–178 (QTLSPPITDR…GCVPQLSDVG (154 aa)) is cleaved from the precursor. The ShKT domain maps to 42 to 76 (CCDHHEWCRFWASIGECNANKDWMTENCQLACGTC). A disulfide bridge links cysteine 181 with cysteine 198. An N-linked (GlcNAc...) asparagine glycan is attached at asparagine 233. Histidine 271 acts as the Proton acceptor in catalysis. Aspartate 272 is a Ca(2+) binding site. The cysteines at positions 284 and 294 are disulfide-linked. Residues threonine 335, tyrosine 337, aspartate 339, and serine 341 each coordinate Ca(2+). Histidine 493 serves as a coordination point for heme b. Residues asparagine 509 and asparagine 617 are each glycosylated (N-linked (GlcNAc...) asparagine). 2 disulfides stabilise this stretch: cysteine 588–cysteine 645 and cysteine 686–cysteine 710.

The protein belongs to the peroxidase family. It depends on heme b as a cofactor. In terms of tissue distribution, expressed in the hypodermal cells, specifically the head and seam/body.

It catalyses the reaction 2 a phenolic donor + H2O2 = 2 a phenolic radical donor + 2 H2O. Functionally, plays an essential role in cuticle biogenesis. Required in combination with bli-3 for correct formation of cross-links in cuticle collagens. The polypeptide is Peroxidase mlt-7 (Caenorhabditis elegans).